Reading from the N-terminus, the 386-residue chain is MGKNEIVAMILAGGQGSRLGVLTKKLAKPAVPFGGKYRIIDFPLSNCSNSGIYTVGVLTQYKPLELNAHIGIGEAWDLDRAHGGVHVLPPYQEEKGGEWYKGTANAIYQNIEFVDRYDPEYILILSGDHIYKMDYTKMLDFHKEKQAEATIAVIEVPMDEASRFGIMNTREDLSIYEFEEKPKNPKNNLASMGIYIFNWKTLKKYLREDESDKTSKNDFGMNIIPSMLGNGNKMVAYPFKGYWKDVGTIDSLWEANMDLIREDNELDLHDEEWKIYSVNPVRPAQYIGENAKVSNSLVVEGCVVNGQVESSILFQGVQIGKNSVVRDSIIMTDAKIGDNVVIEKAIVGSGAIVRKDCKISLGDEIAIIAAKEEVKMGTVIENNKAV.

Residues Y100, G165, 180–181 (EK), and S191 each bind alpha-D-glucose 1-phosphate.

The protein belongs to the bacterial/plant glucose-1-phosphate adenylyltransferase family. In terms of assembly, homotetramer.

The catalysed reaction is alpha-D-glucose 1-phosphate + ATP + H(+) = ADP-alpha-D-glucose + diphosphate. Its pathway is glycan biosynthesis; glycogen biosynthesis. Its function is as follows. Involved in the biosynthesis of ADP-glucose, a building block required for the elongation reactions to produce glycogen. Catalyzes the reaction between ATP and alpha-D-glucose 1-phosphate (G1P) to produce pyrophosphate and ADP-Glc. The sequence is that of Glucose-1-phosphate adenylyltransferase from Clostridium beijerinckii (strain ATCC 51743 / NCIMB 8052) (Clostridium acetobutylicum).